A 136-amino-acid polypeptide reads, in one-letter code: Ribulose bisphosphate carboxylase small subunit, chloroplastic 1 (136 aa).

Residues 1 to 13 (NTDITSNGERVKC) constitute a chloroplast transit peptide.

It belongs to the RuBisCO small chain family. In terms of assembly, heterohexadecamer of 8 large and 8 small subunits.

It localises to the plastid. Its subcellular location is the chloroplast. Its function is as follows. RuBisCO catalyzes two reactions: the carboxylation of D-ribulose 1,5-bisphosphate, the primary event in carbon dioxide fixation, as well as the oxidative fragmentation of the pentose substrate. Both reactions occur simultaneously and in competition at the same active site. Although the small subunit is not catalytic it is essential for maximal activity. This is Ribulose bisphosphate carboxylase small subunit, chloroplastic 1 from Pisum sativum (Garden pea).